The chain runs to 351 residues: Phosphate acyltransferase (351 aa).

It belongs to the PlsX family. Homodimer. Probably interacts with PlsY.

The protein resides in the cytoplasm. It catalyses the reaction a fatty acyl-[ACP] + phosphate = an acyl phosphate + holo-[ACP]. It participates in lipid metabolism; phospholipid metabolism. Its function is as follows. Catalyzes the reversible formation of acyl-phosphate (acyl-PO(4)) from acyl-[acyl-carrier-protein] (acyl-ACP). This enzyme utilizes acyl-ACP as fatty acyl donor, but not acyl-CoA. The polypeptide is Phosphate acyltransferase (Neisseria meningitidis serogroup B (strain ATCC BAA-335 / MC58)).